Consider the following 245-residue polypeptide: Adenosylcobinamide-GDP ribazoletransferase (245 aa).

Helical transmembrane passes span 31–51 (FGRAVLCYPLVGVLIGVVLYA), 61–81 (PLLQAALLLSLWVALSGALHL), 113–133 (VAVVVLVLVLLLKFSALAALL), 138–158 (AGLLPLAPWLARSSLPLLFLT), and 192–212 (LAFGLAGLLALLVTLMLFAWL).

This sequence belongs to the CobS family. It depends on Mg(2+) as a cofactor.

It localises to the cell inner membrane. It carries out the reaction alpha-ribazole + adenosylcob(III)inamide-GDP = adenosylcob(III)alamin + GMP + H(+). It catalyses the reaction alpha-ribazole 5'-phosphate + adenosylcob(III)inamide-GDP = adenosylcob(III)alamin 5'-phosphate + GMP + H(+). It participates in cofactor biosynthesis; adenosylcobalamin biosynthesis; adenosylcobalamin from cob(II)yrinate a,c-diamide: step 7/7. Joins adenosylcobinamide-GDP and alpha-ribazole to generate adenosylcobalamin (Ado-cobalamin). Also synthesizes adenosylcobalamin 5'-phosphate from adenosylcobinamide-GDP and alpha-ribazole 5'-phosphate. The chain is Adenosylcobinamide-GDP ribazoletransferase from Pseudomonas aeruginosa (strain ATCC 15692 / DSM 22644 / CIP 104116 / JCM 14847 / LMG 12228 / 1C / PRS 101 / PAO1).